Here is an 87-residue protein sequence, read N- to C-terminus: Small ribosomal subunit protein bS20 (87 aa).

Residues 1–22 form a disordered region; the sequence is MANSAQARKRARQSLKARAHNA. Over residues 7–19 the composition is skewed to basic residues; sequence ARKRARQSLKARA.

This sequence belongs to the bacterial ribosomal protein bS20 family.

Its function is as follows. Binds directly to 16S ribosomal RNA. This chain is Small ribosomal subunit protein bS20, found in Laribacter hongkongensis (strain HLHK9).